Consider the following 295-residue polypeptide: Ubiquitin-conjugating enzyme E2-34 kDa (295 aa).

The region spanning 7–169 (TASSLLLRQY…VKMEVERSKQ (163 aa)) is the UBC core domain. Cys95 (glycyl thioester intermediate) is an active-site residue. Residues 185–295 (ISQSKLDEPE…EDVERVSKKI (111 aa)) form a disordered region. Ser186 bears the Phosphoserine mark. Positions 189–200 (KLDEPESNKDMA) are enriched in basic and acidic residues. Composition is skewed to acidic residues over residues 207–226 (SDLD…DYDD) and 234–265 (EDDD…DSID). The segment covering 269 to 279 (VMDRKQPHKAE) has biased composition (basic and acidic residues). Phosphoserine occurs at positions 282 and 292.

It belongs to the ubiquitin-conjugating enzyme family. Interacts with CDC53. Component of the E3 ubiquitin ligase complexes SCF with CDC53, SKP1/CBF3D, HRT1 and some F-box proteins like MET30 and CDC4.

The protein localises to the cytoplasm. The protein resides in the nucleus. The enzyme catalyses S-ubiquitinyl-[E1 ubiquitin-activating enzyme]-L-cysteine + [E2 ubiquitin-conjugating enzyme]-L-cysteine = [E1 ubiquitin-activating enzyme]-L-cysteine + S-ubiquitinyl-[E2 ubiquitin-conjugating enzyme]-L-cysteine.. The protein operates within protein modification; protein ubiquitination. Its function is as follows. Catalyzes the covalent attachment of ubiquitin to other proteins. Capable, in vitro, to ubiquitinate histone H2A. Functionally, mediates the initiation of DNA replication (transition of G1 to S phase in cell cycle). Essential component of the E3 ubiquitin ligase complex SCF (SKP1-CUL1-F-box protein), which mediates the ubiquitination and subsequent proteasomal degradation of target proteins. Involved in the regulation of methionine biosynthesis genes and in the degradation of CDC6 together with CDC4 and CDC53. The sequence is that of Ubiquitin-conjugating enzyme E2-34 kDa (CDC34) from Saccharomyces cerevisiae (strain ATCC 204508 / S288c) (Baker's yeast).